Consider the following 364-residue polypeptide: Developmentally-regulated GTP-binding protein 2 (364 aa).

Lys21 carries the post-translational modification (3S)-3-hydroxylysine. In terms of domain architecture, OBG-type G spans 63-288 (ARVALIGFPS…LLEMLWEYLA (226 aa)). Residues 69–76 (GFPSVGKS), 94–98 (FTTLT), 115–118 (DLPG), 246–249 (NKID), and 269–271 (SCG) each bind GTP. Ser76 and Thr96 together coordinate Mg(2+). The region spanning 288-363 (ALTCIYTKKR…EHEDVIQIVK (76 aa)) is the TGS domain.

Belongs to the TRAFAC class OBG-HflX-like GTPase superfamily. OBG GTPase family. As to quaternary structure, interacts with RWDD1; this interaction confers protection to polyubiquitination and proteolytic degradation. Interacts with JMJD7; this interaction is direct. Mg(2+) serves as cofactor. Post-translationally, hydroxylated (with S stereochemistry) at C-3 of Lys-21 by JMJD7; this modification hinders trypsin-catalyzed proteolysis in vitro. In terms of processing, polyubiquitinated. In terms of tissue distribution, highest levels in skeletal muscle, heart and kidney. Low levels in colon, thymus, spleen, small intestine, lung and Leukocytes.

It localises to the nucleus. Its subcellular location is the cytoplasm. The catalysed reaction is GTP + H2O = GDP + phosphate + H(+). In terms of biological role, catalyzes the conversion of GTP to GDP through hydrolysis of the gamma-phosphate bond in GTP. When hydroxylated at C-3 of 'Lys-21' by JMJD7, may bind to RNA and play a role in translation. This chain is Developmentally-regulated GTP-binding protein 2, found in Homo sapiens (Human).